Consider the following 248-residue polypeptide: Ureidoacrylate amidohydrolase RutB (248 aa).

Asp41 functions as the Proton acceptor in the catalytic mechanism. Lys150 is a catalytic residue. Residue Cys183 is the Nucleophile of the active site.

The protein belongs to the isochorismatase family. RutB subfamily.

It carries out the reaction (Z)-3-ureidoacrylate + H2O + H(+) = (Z)-3-aminoacrylate + NH4(+) + CO2. The enzyme catalyses (Z)-3-ureidoacrylate + H2O = (Z)-3-aminoacrylate + carbamate + H(+). The catalysed reaction is (Z)-2-methylureidoacrylate + H2O + H(+) = (Z)-2-methylaminoacrylate + NH4(+) + CO2. Functionally, hydrolyzes ureidoacrylate to form aminoacrylate and carbamate. The carbamate hydrolyzes spontaneously, thereby releasing one of the nitrogen atoms of the pyrimidine ring as ammonia and one of its carbon atoms as CO2. This chain is Ureidoacrylate amidohydrolase RutB, found in Methylorubrum extorquens (strain CM4 / NCIMB 13688) (Methylobacterium extorquens).